The following is a 246-amino-acid chain: Pyridoxine 5'-phosphate synthase (246 aa).

3-amino-2-oxopropyl phosphate is bound at residue Asn-7. 9-10 (DH) contributes to the 1-deoxy-D-xylulose 5-phosphate binding site. Position 18 (Arg-18) interacts with 3-amino-2-oxopropyl phosphate. The Proton acceptor role is filled by His-43. 1-deoxy-D-xylulose 5-phosphate is bound by residues Arg-45 and His-50. Glu-70 serves as the catalytic Proton acceptor. Thr-100 is a binding site for 1-deoxy-D-xylulose 5-phosphate. His-190 acts as the Proton donor in catalysis. Residues Gly-191 and 212–213 (GH) contribute to the 3-amino-2-oxopropyl phosphate site.

Belongs to the PNP synthase family. In terms of assembly, homooctamer; tetramer of dimers.

It localises to the cytoplasm. It carries out the reaction 3-amino-2-oxopropyl phosphate + 1-deoxy-D-xylulose 5-phosphate = pyridoxine 5'-phosphate + phosphate + 2 H2O + H(+). It functions in the pathway cofactor biosynthesis; pyridoxine 5'-phosphate biosynthesis; pyridoxine 5'-phosphate from D-erythrose 4-phosphate: step 5/5. Catalyzes the complicated ring closure reaction between the two acyclic compounds 1-deoxy-D-xylulose-5-phosphate (DXP) and 3-amino-2-oxopropyl phosphate (1-amino-acetone-3-phosphate or AAP) to form pyridoxine 5'-phosphate (PNP) and inorganic phosphate. This chain is Pyridoxine 5'-phosphate synthase, found in Prochlorococcus marinus (strain SARG / CCMP1375 / SS120).